Reading from the N-terminus, the 427-residue chain is Trigger factor (427 aa).

One can recognise a PPIase FKBP-type domain in the interval G163–P248.

This sequence belongs to the FKBP-type PPIase family. Tig subfamily.

Its subcellular location is the cytoplasm. The catalysed reaction is [protein]-peptidylproline (omega=180) = [protein]-peptidylproline (omega=0). Involved in protein export. Acts as a chaperone by maintaining the newly synthesized protein in an open conformation. Functions as a peptidyl-prolyl cis-trans isomerase. In Streptococcus equi subsp. zooepidemicus (strain H70), this protein is Trigger factor.